Here is a 427-residue protein sequence, read N- to C-terminus: MELNLKMDRSKELFEESKKYLVGGVNSPVRSFKPFPFFVKSAKDCFLYDEDGNEFIDYCLAYGPMVLGHANENILNAVKSQMDLGTAYGVPSEKEITLAKEVINRIPCAEMVRFVNSGTEATMGAIRLARGVTGRDKIIKFEGAFHGAHDYVLVKTGSGALTHGAPNSPGIPEDTTKNTLLIPFNDEDAVRKVISENKDEIACIILEPVMGNVGCILPQDGYLQFLREITEENGILLIFDEVITGFRLSKGGAQEYFGIKSDLATIGKILGGGFPIGAITGKKEYMEQFSPSGQIYQAGTFNGNPVSVTAGIETLKNLDDKFYKETTKKADILSNFLRETAEKYNVSTKVYNVASIFQIYFNEKEVVTYEDAKSSDTEKFMRYFYTLLENGVFVAPSQFECCFTSIKHNDEVLEKTMNAIDIAMKKL.

Lys-268 bears the N6-(pyridoxal phosphate)lysine mark.

Belongs to the class-III pyridoxal-phosphate-dependent aminotransferase family. HemL subfamily. Pyridoxal 5'-phosphate serves as cofactor.

The protein localises to the cytoplasm. It catalyses the reaction (S)-4-amino-5-oxopentanoate = 5-aminolevulinate. It participates in porphyrin-containing compound metabolism; protoporphyrin-IX biosynthesis; 5-aminolevulinate from L-glutamyl-tRNA(Glu): step 2/2. This chain is Glutamate-1-semialdehyde 2,1-aminomutase, found in Methanococcus maripaludis (strain C5 / ATCC BAA-1333).